Reading from the N-terminus, the 177-residue chain is B-phycoerythrin beta chain (177 aa).

Residues K28, N35, D39, C50, D54, C61, N72, 77–78 (RR), C82, R129, 147–148 (SQ), 154–158 (PQGDC), and C158 contribute to the (2R,3E)-phycoerythrobilin site. N72 carries the post-translational modification N4-methylasparagine.

The protein belongs to the phycobiliprotein family. Heterotetramer of 2 different alpha chains and 2 identical beta chains. The subunit composition could comprise any combination of 2 out of 4 different alpha units with an invariant beta unit. In terms of processing, contains three covalently linked phycoerythrobilin chromophores.

It localises to the plastid. It is found in the chloroplast thylakoid membrane. Functionally, light-harvesting photosynthetic tetrapyrrole chromophore-protein from the phycobiliprotein complex. The polypeptide is B-phycoerythrin beta chain (cpeB) (Rhodomonas sp. (strain CS 24) (Chroomonas sp. (strain CS24))).